Consider the following 240-residue polypeptide: tRNA (guanine-N(7)-)-methyltransferase (240 aa).

Residues Glu70, Glu95, Asp122, and Asp145 each contribute to the S-adenosyl-L-methionine site. The active site involves Asp145. Substrate-binding positions include Lys149, Asp181, and 218–221 (TKFE).

Belongs to the class I-like SAM-binding methyltransferase superfamily. TrmB family.

The enzyme catalyses guanosine(46) in tRNA + S-adenosyl-L-methionine = N(7)-methylguanosine(46) in tRNA + S-adenosyl-L-homocysteine. It functions in the pathway tRNA modification; N(7)-methylguanine-tRNA biosynthesis. Its function is as follows. Catalyzes the formation of N(7)-methylguanine at position 46 (m7G46) in tRNA. This is tRNA (guanine-N(7)-)-methyltransferase from Pseudomonas entomophila (strain L48).